The primary structure comprises 508 residues: MSNCLKHPWLENGLLNLIKNADVLPIRVFKCQPLQIFEYIRYEHPIRCKLSDTEFYIEAEFSSQSISDLNNFTEKRITSLRGGIVTLGNFLIHLIPSQSGIIPWIQVESFNFQGCEGAVFGNPKAITTSALFNALLQSPYLAALANEFNRSIKEGSSYQEASLSQQEKPNDNTSNSRDIKNNIQFHWKNMTSLSIEECIIPKGQQLILEKESEENTTHGIYLEERKMAQGLHNSVSETPEVKQEDNDEDLDAYSWSSSTDSAGEIPSLPTNRKILEKIAEKPPPFESPLEDDETPDQTNEHEANQVNVSQLPLNPRGSGISGRPVESTEQLNSSLTIERSQSIQSTDSKQRVETQSHRRSKIEIFDAQDELFDRSICTTIDDSTGKLLNAEETPIKTGDLHSTSASSVISCTPPAINFTSDICNEQIELEYKRKPIPDYDFMKGLETTLQELYVEHQSKKRRLELFQLTNNHQKNSEACEMCRLGLPHGSFFELLRDWKKIEEFRNKS.

Residues 2–223 (SNCLKHPWLE…ENTTHGIYLE (222 aa)) form a pot1-binding region. Disordered regions lie at residues 159–178 (QEAS…NSRD), 235–269 (VSET…PSLP), and 282–358 (PPPF…QSHR). Over residues 327–347 (STEQLNSSLTIERSQSIQSTD) the composition is skewed to polar residues. The segment covering 348-358 (SKQRVETQSHR) has biased composition (basic and acidic residues). The ccq1/poz1-binding stretch occupies residues 379–508 (TIDDSTGKLL…KKIEEFRNKS (130 aa)).

In terms of assembly, interacts with ccq1, pot1 and poz1.

It localises to the chromosome. The protein resides in the telomere. It is found in the nucleus. Telomeric DNA-binding protein that is required to protect the 3'-end telomeric overhang and involved in telomere length regulation. recruits poz1 and ccq1 to telomeres, regulating telomere length negatively and positively respectively. The chain is Protection of telomeres protein tpz1 (tpz1) from Schizosaccharomyces pombe (strain 972 / ATCC 24843) (Fission yeast).